We begin with the raw amino-acid sequence, 844 residues long: DNA mismatch repair protein MutS (844 aa).

Residue 602 to 609 coordinates ATP; the sequence is GPNMSGKS.

It belongs to the DNA mismatch repair MutS family.

Its function is as follows. This protein is involved in the repair of mismatches in DNA. It is possible that it carries out the mismatch recognition step. This protein has a weak ATPase activity. This chain is DNA mismatch repair protein MutS, found in Streptococcus pneumoniae (strain Hungary19A-6).